The following is a 481-amino-acid chain: UDP-N-acetylmuramate--L-alanine ligase (481 aa).

Glycine 123 to threonine 129 contributes to the ATP binding site.

It belongs to the MurCDEF family.

The protein resides in the cytoplasm. It catalyses the reaction UDP-N-acetyl-alpha-D-muramate + L-alanine + ATP = UDP-N-acetyl-alpha-D-muramoyl-L-alanine + ADP + phosphate + H(+). It functions in the pathway cell wall biogenesis; peptidoglycan biosynthesis. Cell wall formation. The chain is UDP-N-acetylmuramate--L-alanine ligase from Pseudomonas fluorescens (strain SBW25).